The sequence spans 325 residues: MAVDLMRFPKIDDQTAIQEAASQGLQSMEHLIRVLSNRPEQQHNVDCSEITDFTVSKFKTVISLLNRTGHARFRRGPVHSTSSAASQKLQSQIVKNTQPEAPIVRTTTNHPQIVPPPSSVTLDFSKPSIFGTKAKSAELEFSKENFSVSLNSSFMSSAITGDGSVSNGKIFLASAPLQPVNSSGKPPLAGHPYRKRCLEHEHSESFSGKVSGSAYGKCHCKKSRKNRMKRTVRVPAISAKIADIPPDEYSWRKYGQKPIKGSPHPRGYYKCSTFRGCPARKHVERALDDPAMLIVTYEGEHRHNQSAMQENISSSGINDLVFASA.

The WRKY DNA-binding region spans 240 to 306 (KIADIPPDEY…YEGEHRHNQS (67 aa)).

It belongs to the WRKY group II-d family. In terms of tissue distribution, in young, mature and senescent leaves.

The protein resides in the nucleus. Its function is as follows. Transcription factor. Interacts specifically with the W box (5'-(T)TGAC[CT]-3'), a frequently occurring elicitor-responsive cis-acting element. Regulates rhizobacterium B.cereus AR156-induced systemic resistance (ISR) to P.syringae pv. tomato DC3000, probably by activating the jasmonic acid (JA)- signaling pathway. In Arabidopsis thaliana (Mouse-ear cress), this protein is Probable WRKY transcription factor 11 (WRKY11).